The primary structure comprises 547 residues: Probable ABC transporter periplasmic-binding protein SapA (547 aa).

The signal sequence occupies residues 1 to 21; it reads MRQVLSSLLVIAGLVSGQAIA.

It belongs to the bacterial solute-binding protein 5 family.

It localises to the periplasm. Its function is as follows. Not part of a putrescine export system. Very similar to a S.typhimurium protein implicated in antimicrobial peptide resistance, but the SapBCDF operon in E.coli is implicated in putrescine export. The polypeptide is Probable ABC transporter periplasmic-binding protein SapA (sapA) (Escherichia coli (strain K12)).